A 295-amino-acid polypeptide reads, in one-letter code: MEEFDSEDFSTSDEDEDYVPSGGEYSEDDVNELVKEDEVDGEEQAEKTKGKRRKAQSIPARKRKQSGLLLDEEEDGEEDSGGSSREEDEEEQEGGLGSETSRKKKEDELWASFLNDVGTKSKAASSSQVKVAEETEETSSSKPLVKADELEKPKESEKVKITKVFDFAGEEVRVTKEVDATSKEAKSFLKQTEKEKPQALVTSAATPPPAGSGIKRTSGMSSLLGKIGAKKQKMSTLEKSKLDWESFKEEEGIGEELAIHNRGKEGYIERKAFLERVDHRQFEIERDLRLSKMKP.

Acidic residues-rich tracts occupy residues 1–18 and 25–43; these read MEEFDSEDFSTSDEDEDY and YSEDDVNELVKEDEVDGEE. 2 disordered regions span residues 1–155 and 188–219; these read MEEF…KPKE and FLKQTEKEKPQALVTSAATPPPAGSGIKRTSG. Basic residues predominate over residues 49 to 65; it reads KGKRRKAQSIPARKRKQ. Residues 70-93 are compositionally biased toward acidic residues; sequence LDEEEDGEEDSGGSSREEDEEEQE. Phosphoserine occurs at positions 80, 83, 84, and 112. Residues 120-130 are compositionally biased toward low complexity; that stretch reads KSKAASSSQVK. Basic and acidic residues-rich tracts occupy residues 145-155 and 188-197; these read VKADELEKPKE and FLKQTEKEKP. Lysine 146 participates in a covalent cross-link: Glycyl lysine isopeptide (Lys-Gly) (interchain with G-Cter in SUMO2). The hydrophilic stretch occupies residues 174–213; the sequence is VTKEVDATSKEAKSFLKQTEKEKPQALVTSAATPPPAGSG. A Phosphoserine modification is found at serine 212. Positions 214–295 constitute a BCNT-C domain; that stretch reads IKRTSGMSSL…RDLRLSKMKP (82 aa). N6-methyllysine is present on lysine 215. Serine 246 is subject to Phosphoserine.

Its subcellular location is the chromosome. It localises to the centromere. The protein resides in the kinetochore. In terms of biological role, may play a role during embryogenesis. This Rattus norvegicus (Rat) protein is Craniofacial development protein 1 (Cfdp1).